Here is a 513-residue protein sequence, read N- to C-terminus: TRAF3-interacting JNK-activating modulator (513 aa).

3 disordered regions span residues 1–96, 130–171, and 381–402; these read MISS…GQVS, SSGI…KAEE, and SLQG…QLKK. The Cytoplasmic segment spans residues 1–485; that stretch reads MISSDSRSSP…QLQVKENELQ (485 aa). 2 stretches are compositionally biased toward basic and acidic residues: residues 17–31 and 69–79; these read ESYE…ETRE and RNLEEEKKGQA. Residues 266–488 are a coiled coil; the sequence is MKKVLLEMED…VKENELQCGQ (223 aa). A compositionally biased stretch (polar residues) spans 386 to 397; it reads GEQQSSETQDLQ. Residues 486–506 traverse the membrane as a helical; Anchor for type IV membrane protein segment; sequence CGQWLPVLMVVIATALAVFLA. The Extracellular segment spans residues 507 to 513; it reads NKGNLVI.

As to quaternary structure, interacts (via its coiled-coil domain) with TRAF3 (via isoleucine zipper). Interacts with MAP2K1. Interacts with PPP2CA; this interaction targets PPP2CA to the lysosomes. Interacts with MAVS. Interacts with TBK1. As to expression, expressed in bone marrow, spleen and thymus. Not detected in heart, kidney and liver.

It is found in the cell membrane. The protein resides in the golgi apparatus membrane. The protein localises to the lysosome membrane. Its subcellular location is the mitochondrion outer membrane. Adapter protein that plays essential roles in both innate and adaptive immunity. Plays a crucial role in the regulation of thymocyte development. Mechanistically, mediates TCR-stimulated activation through recruiting MAP2K1/MEK1 to the Golgi and, thereby, facilitating the interaction of MAP2K1/MEK1 with its activator BRAF. Also plays an essential role in regulatory T-cell stability and function by recruiting the serine-threonine phosphatase catalytic subunit (PPP2CA) to the lysosome, thereby facilitating the interaction of PP2Ac with the mTORC1 component RPTOR and restricting glycolytic metabolism. Positively regulates TLR4 signaling activity in macrophage-mediated inflammation by acting as a molecular clamp to facilitate LPS-induced translocation of TLR4 to lipid rafts. In response to viral infection, facilitates the recruitment of TRAF3 to MAVS within mitochondria leading to IRF3 activation and interferon production. However, participates in the maintenance of immune homeostasis and the prevention of overzealous innate immunity by promoting 'Lys-48'-dependent ubiquitination of TBK1. The chain is TRAF3-interacting JNK-activating modulator (Traf3ip3) from Mus musculus (Mouse).